The sequence spans 342 residues: DNA-directed RNA polymerase subunit alpha (342 aa).

Residues 1–238 (MESLNVNAKN…DQLNMFVNFD (238 aa)) form an alpha N-terminal domain (alpha-NTD) region. Residues 254 to 342 (FNKNLLRKVD…EMSKKLEEQI (89 aa)) are alpha C-terminal domain (alpha-CTD).

This sequence belongs to the RNA polymerase alpha chain family. In terms of assembly, homodimer. The RNAP catalytic core consists of 2 alpha, 1 beta, 1 beta' and 1 omega subunit. When a sigma factor is associated with the core the holoenzyme is formed, which can initiate transcription.

It carries out the reaction RNA(n) + a ribonucleoside 5'-triphosphate = RNA(n+1) + diphosphate. Functionally, DNA-dependent RNA polymerase catalyzes the transcription of DNA into RNA using the four ribonucleoside triphosphates as substrates. This is DNA-directed RNA polymerase subunit alpha from Pelagibacter ubique (strain HTCC1062).